Reading from the N-terminus, the 431-residue chain is Histidine--tRNA ligase (431 aa).

Belongs to the class-II aminoacyl-tRNA synthetase family. As to quaternary structure, homodimer.

It localises to the cytoplasm. It catalyses the reaction tRNA(His) + L-histidine + ATP = L-histidyl-tRNA(His) + AMP + diphosphate + H(+). This Neisseria meningitidis serogroup A / serotype 4A (strain DSM 15465 / Z2491) protein is Histidine--tRNA ligase.